We begin with the raw amino-acid sequence, 306 residues long: 3-methyl-2-oxobutanoate hydroxymethyltransferase (306 aa).

Mg(2+)-binding residues include aspartate 53 and aspartate 96. Residues 53–54 (DS), aspartate 96, and lysine 126 contribute to the 3-methyl-2-oxobutanoate site. Glutamate 128 serves as a coordination point for Mg(2+). Residue glutamate 195 is the Proton acceptor of the active site.

It belongs to the PanB family. As to quaternary structure, homodecamer; pentamer of dimers. Mg(2+) serves as cofactor.

It is found in the cytoplasm. The enzyme catalyses 3-methyl-2-oxobutanoate + (6R)-5,10-methylene-5,6,7,8-tetrahydrofolate + H2O = 2-dehydropantoate + (6S)-5,6,7,8-tetrahydrofolate. It participates in cofactor biosynthesis; (R)-pantothenate biosynthesis; (R)-pantoate from 3-methyl-2-oxobutanoate: step 1/2. In terms of biological role, catalyzes the reversible reaction in which hydroxymethyl group from 5,10-methylenetetrahydrofolate is transferred onto alpha-ketoisovalerate to form ketopantoate. This Anaeromyxobacter dehalogenans (strain 2CP-1 / ATCC BAA-258) protein is 3-methyl-2-oxobutanoate hydroxymethyltransferase.